The sequence spans 48 residues: Large ribosomal subunit protein bL36c (48 aa).

This sequence belongs to the bacterial ribosomal protein bL36 family.

It localises to the plastid. The protein resides in the chloroplast. The protein is Large ribosomal subunit protein bL36c of Rhodomonas salina (Cryptomonas salina).